A 419-amino-acid chain; its full sequence is MTDLIQMGKQAKQAAFALSQLSQQEKNHALALIAERLEAQQERILAENAKDIQAARENGLSESIIDRLLLTKERLTGIADDVRHVISLADPVGKIIDGGVLDSGLKLERIRTPLGVIGTIYEARPNVTIDVASLCLKTGNAVILRGGKETQHSNKILVEVIQNALQQAGLPEMAVQAITDPDRALVMELLHLDKYVDMIIPRGGAGLQALCRDNSSIPVIVGGIGVCHIFVEQSADQDRSLAVIENAKTQRPSTCNTVETLLVQESIAEEFLPKLARRLKTKEVKFHADSTALSILQGVSADVKPVTEQQLRNEWLTYDLNVVIVKGIEEAVEHIREYGSEHSESILTESQKLANQFVAQVDAAAVYVNASTRFTDGGQFGLGAEVAVSTQKLHARGPMGLEALTTYKWVCVGDYTSRA.

Belongs to the gamma-glutamyl phosphate reductase family.

Its subcellular location is the cytoplasm. The enzyme catalyses L-glutamate 5-semialdehyde + phosphate + NADP(+) = L-glutamyl 5-phosphate + NADPH + H(+). The protein operates within amino-acid biosynthesis; L-proline biosynthesis; L-glutamate 5-semialdehyde from L-glutamate: step 2/2. Catalyzes the NADPH-dependent reduction of L-glutamate 5-phosphate into L-glutamate 5-semialdehyde and phosphate. The product spontaneously undergoes cyclization to form 1-pyrroline-5-carboxylate. This Mannheimia succiniciproducens (strain KCTC 0769BP / MBEL55E) protein is Gamma-glutamyl phosphate reductase.